A 473-amino-acid polypeptide reads, in one-letter code: Glutamyl-tRNA reductase (473 aa).

Residues 49 to 52, Ser109, 114 to 116, and Gln120 contribute to the substrate site; these read TCNR and EHQ. Cys50 serves as the catalytic Nucleophile. 189–194 lines the NADP(+) pocket; that stretch reads GAGAMA. The disordered stretch occupies residues 422–473; the sequence is VAISAPQPSTDSPARAAYQPTDEAATDAEPRRDDAEPPSAAAAQDAGRESRP.

Belongs to the glutamyl-tRNA reductase family. As to quaternary structure, homodimer.

The catalysed reaction is (S)-4-amino-5-oxopentanoate + tRNA(Glu) + NADP(+) = L-glutamyl-tRNA(Glu) + NADPH + H(+). Its pathway is porphyrin-containing compound metabolism; protoporphyrin-IX biosynthesis; 5-aminolevulinate from L-glutamyl-tRNA(Glu): step 1/2. Catalyzes the NADPH-dependent reduction of glutamyl-tRNA(Glu) to glutamate 1-semialdehyde (GSA). The protein is Glutamyl-tRNA reductase of Acidothermus cellulolyticus (strain ATCC 43068 / DSM 8971 / 11B).